The primary structure comprises 609 residues: Dihydroxy-acid dehydratase 1 (609 aa).

D81 contacts Mg(2+). Residue C122 participates in [2Fe-2S] cluster binding. The Mg(2+) site is built by D123 and K124. Residue K124 is modified to N6-carboxylysine. Position 195 (C195) interacts with [2Fe-2S] cluster. E491 is a Mg(2+) binding site. S517 (proton acceptor) is an active-site residue.

Belongs to the IlvD/Edd family. As to quaternary structure, homodimer. [2Fe-2S] cluster serves as cofactor. Mg(2+) is required as a cofactor.

The catalysed reaction is (2R)-2,3-dihydroxy-3-methylbutanoate = 3-methyl-2-oxobutanoate + H2O. The enzyme catalyses (2R,3R)-2,3-dihydroxy-3-methylpentanoate = (S)-3-methyl-2-oxopentanoate + H2O. It functions in the pathway amino-acid biosynthesis; L-isoleucine biosynthesis; L-isoleucine from 2-oxobutanoate: step 3/4. Its pathway is amino-acid biosynthesis; L-valine biosynthesis; L-valine from pyruvate: step 3/4. Functions in the biosynthesis of branched-chain amino acids. Catalyzes the dehydration of (2R,3R)-2,3-dihydroxy-3-methylpentanoate (2,3-dihydroxy-3-methylvalerate) into 2-oxo-3-methylpentanoate (2-oxo-3-methylvalerate) and of (2R)-2,3-dihydroxy-3-methylbutanoate (2,3-dihydroxyisovalerate) into 2-oxo-3-methylbutanoate (2-oxoisovalerate), the penultimate precursor to L-isoleucine and L-valine, respectively. The protein is Dihydroxy-acid dehydratase 1 of Acinetobacter baylyi (strain ATCC 33305 / BD413 / ADP1).